The primary structure comprises 178 residues: Large ribosomal subunit protein bL35m (178 aa).

It belongs to the bacterial ribosomal protein bL35 family.

It localises to the mitochondrion. The chain is Large ribosomal subunit protein bL35m (mRpL35) from Drosophila melanogaster (Fruit fly).